The following is a 570-amino-acid chain: Proline--tRNA ligase (570 aa).

This sequence belongs to the class-II aminoacyl-tRNA synthetase family. ProS type 1 subfamily. Homodimer.

Its subcellular location is the cytoplasm. The catalysed reaction is tRNA(Pro) + L-proline + ATP = L-prolyl-tRNA(Pro) + AMP + diphosphate. In terms of biological role, catalyzes the attachment of proline to tRNA(Pro) in a two-step reaction: proline is first activated by ATP to form Pro-AMP and then transferred to the acceptor end of tRNA(Pro). As ProRS can inadvertently accommodate and process non-cognate amino acids such as alanine and cysteine, to avoid such errors it has two additional distinct editing activities against alanine. One activity is designated as 'pretransfer' editing and involves the tRNA(Pro)-independent hydrolysis of activated Ala-AMP. The other activity is designated 'posttransfer' editing and involves deacylation of mischarged Ala-tRNA(Pro). The misacylated Cys-tRNA(Pro) is not edited by ProRS. The sequence is that of Proline--tRNA ligase from Clostridium acetobutylicum (strain ATCC 824 / DSM 792 / JCM 1419 / IAM 19013 / LMG 5710 / NBRC 13948 / NRRL B-527 / VKM B-1787 / 2291 / W).